The sequence spans 145 residues: D-aminoacyl-tRNA deacylase (145 aa).

Residues 137 to 138 (GP) carry the Gly-cisPro motif, important for rejection of L-amino acids motif.

It belongs to the DTD family. As to quaternary structure, homodimer.

Its subcellular location is the cytoplasm. It carries out the reaction glycyl-tRNA(Ala) + H2O = tRNA(Ala) + glycine + H(+). The catalysed reaction is a D-aminoacyl-tRNA + H2O = a tRNA + a D-alpha-amino acid + H(+). An aminoacyl-tRNA editing enzyme that deacylates mischarged D-aminoacyl-tRNAs. Also deacylates mischarged glycyl-tRNA(Ala), protecting cells against glycine mischarging by AlaRS. Acts via tRNA-based rather than protein-based catalysis; rejects L-amino acids rather than detecting D-amino acids in the active site. By recycling D-aminoacyl-tRNA to D-amino acids and free tRNA molecules, this enzyme counteracts the toxicity associated with the formation of D-aminoacyl-tRNA entities in vivo and helps enforce protein L-homochirality. This Ruegeria pomeroyi (strain ATCC 700808 / DSM 15171 / DSS-3) (Silicibacter pomeroyi) protein is D-aminoacyl-tRNA deacylase.